The chain runs to 286 residues: 3-methyl-2-oxobutanoate hydroxymethyltransferase (286 aa).

Mg(2+)-binding residues include aspartate 51 and aspartate 90. Residues 51 to 52, aspartate 90, and lysine 120 each bind 3-methyl-2-oxobutanoate; that span reads DS. Residue glutamate 122 participates in Mg(2+) binding. Glutamate 189 functions as the Proton acceptor in the catalytic mechanism. The segment at 263–286 is disordered; it reads TFPGPSHVFSGSKASSDLNGGDES.

It belongs to the PanB family. As to quaternary structure, homodecamer; pentamer of dimers. The cofactor is Mg(2+).

The protein resides in the cytoplasm. It carries out the reaction 3-methyl-2-oxobutanoate + (6R)-5,10-methylene-5,6,7,8-tetrahydrofolate + H2O = 2-dehydropantoate + (6S)-5,6,7,8-tetrahydrofolate. It participates in cofactor biosynthesis; (R)-pantothenate biosynthesis; (R)-pantoate from 3-methyl-2-oxobutanoate: step 1/2. Catalyzes the reversible reaction in which hydroxymethyl group from 5,10-methylenetetrahydrofolate is transferred onto alpha-ketoisovalerate to form ketopantoate. This chain is 3-methyl-2-oxobutanoate hydroxymethyltransferase, found in Mesorhizobium japonicum (strain LMG 29417 / CECT 9101 / MAFF 303099) (Mesorhizobium loti (strain MAFF 303099)).